Consider the following 335-residue polypeptide: Mycobacterial beta-ketoacyl-[acyl-carrier-protein] synthase III (335 aa).

Active-site residues include cysteine 122 and histidine 258. The ACP-binding stretch occupies residues glutamine 259 to arginine 263. The active site involves asparagine 289.

It belongs to the thiolase-like superfamily. FabH family. Homodimer.

Its subcellular location is the cytoplasm. It catalyses the reaction malonyl-[ACP] + dodecanoyl-CoA + H(+) = 3-oxotetradecanoyl-[ACP] + CO2 + CoA. The protein operates within lipid metabolism; fatty acid biosynthesis. Its pathway is lipid metabolism; mycolic acid biosynthesis. Its function is as follows. Catalyzes the condensation reaction of fatty acid synthesis by the addition to an acyl acceptor of two carbons from malonyl-ACP. Catalyzes the first condensation reaction which initiates fatty acid synthesis and may therefore play a role in governing the total rate of fatty acid production. Possesses both acetoacetyl-ACP synthase and acetyl transacylase activities. Its substrate specificity determines the biosynthesis of branched-chain and/or straight-chain of fatty acids. The chain is Mycobacterial beta-ketoacyl-[acyl-carrier-protein] synthase III from Mycobacterium marinum (strain ATCC BAA-535 / M).